Reading from the N-terminus, the 418-residue chain is Serine protease inhibitor A3M (418 aa).

The signal sequence occupies residues 1–20; sequence MAFIAALGILMAGICPTVLC. N-linked (GlcNAc...) asparagine glycans are attached at residues N104, N184, and N269. Residues 367 to 392 are RCL; it reads GTEAAAATGFIFGFRSRRLQTMTVQF.

The protein belongs to the serpin family. As to expression, expressed in liver and testis.

Its subcellular location is the secreted. The sequence is that of Serine protease inhibitor A3M (Serpina3m) from Mus musculus (Mouse).